The primary structure comprises 275 residues: Tryptase (275 aa).

The signal sequence occupies residues 1-20; it reads MLNLLVLALPLLVSLVHTAP. Residues 21-30 constitute a propeptide, activation peptide; that stretch reads APGQALERAG. One can recognise a Peptidase S1 domain in the interval 31–272; that stretch reads IVGGKEAPGH…YLDWIHQCIP (242 aa). An intrachain disulfide couples C59 to C75. Active-site charge relay system residues include H74 and D121. Residue N132 is glycosylated (N-linked (GlcNAc...) asparagine). Cystine bridges form between C155/C230, C188/C211, and C220/C248. S224 functions as the Charge relay system in the catalytic mechanism. A glycan (N-linked (GlcNAc...) asparagine) is linked at N233.

Belongs to the peptidase S1 family. Tryptase subfamily. As to quaternary structure, homotetramer.

The protein resides in the secreted. It catalyses the reaction Preferential cleavage: Arg-|-Xaa, Lys-|-Xaa, but with more restricted specificity than trypsin.. Its function is as follows. Tryptase is the major neutral protease present in mast cells and is secreted upon the coupled activation-degranulation response of this cell type. This is Tryptase (MCT7) from Sus scrofa (Pig).